The primary structure comprises 576 residues: Rop guanine nucleotide exchange factor 13 (576 aa).

A PRONE domain is found at 119–485 (KSCYFAYVTE…QLTQNPELAM (367 aa)). The span at 557-570 (KTTYLESLGTTRSP) shows a compositional bias: polar residues. Positions 557-576 (KTTYLESLGTTRSPTAGRYS) are disordered.

In terms of assembly, interacts with PRK6. Specifically expressed in mature flowers.

Its function is as follows. Guanine-nucleotide exchange factor (GEF) that acts as an activator of Rop (Rho of plants) GTPases by promoting the exchange of GDP for GTP. The sequence is that of Rop guanine nucleotide exchange factor 13 from Arabidopsis thaliana (Mouse-ear cress).